The chain runs to 431 residues: UDP-N-acetylglucosamine 1-carboxyvinyltransferase (431 aa).

22–23 (KN) is a phosphoenolpyruvate binding site. Residue R93 participates in UDP-N-acetyl-alpha-D-glucosamine binding. The Proton donor role is filled by C117. 2-(S-cysteinyl)pyruvic acid O-phosphothioketal is present on C117. UDP-N-acetyl-alpha-D-glucosamine is bound by residues D307 and V329.

This sequence belongs to the EPSP synthase family. MurA subfamily.

The protein resides in the cytoplasm. It carries out the reaction phosphoenolpyruvate + UDP-N-acetyl-alpha-D-glucosamine = UDP-N-acetyl-3-O-(1-carboxyvinyl)-alpha-D-glucosamine + phosphate. The protein operates within cell wall biogenesis; peptidoglycan biosynthesis. In terms of biological role, cell wall formation. Adds enolpyruvyl to UDP-N-acetylglucosamine. The protein is UDP-N-acetylglucosamine 1-carboxyvinyltransferase of Nitrosococcus oceani (strain ATCC 19707 / BCRC 17464 / JCM 30415 / NCIMB 11848 / C-107).